A 340-amino-acid chain; its full sequence is Coproporphyrin III ferrochelatase (340 aa).

Residues serine 52 and tyrosine 121 each coordinate Fe-coproporphyrin III. Fe(2+)-binding residues include histidine 181 and glutamate 264.

Belongs to the ferrochelatase family.

It is found in the cytoplasm. The catalysed reaction is Fe-coproporphyrin III + 2 H(+) = coproporphyrin III + Fe(2+). Its pathway is porphyrin-containing compound metabolism; protoheme biosynthesis. Involved in coproporphyrin-dependent heme b biosynthesis. Catalyzes the insertion of ferrous iron into coproporphyrin III to form Fe-coproporphyrin III. The polypeptide is Coproporphyrin III ferrochelatase (Mycolicibacterium smegmatis (strain ATCC 700084 / mc(2)155) (Mycobacterium smegmatis)).